A 246-amino-acid chain; its full sequence is Myelin protein P0 (246 aa).

The N-terminal stretch at 1 to 27 is a signal peptide; the sequence is MFRDLKPAYLFCCSVLYAFSVLRPSQG. In terms of domain architecture, Ig-like V-type spans 28-143; sequence ISVSTHHNLH…VGTSSDVHLT (116 aa). At 28–150 the chain is on the extracellular side; it reads ISVSTHHNLH…HLTVYDKIPP (123 aa). Residues C48 and C125 are joined by a disulfide bond. N120 carries an N-linked (GlcNAc...) (complex) asparagine glycan. A helical transmembrane segment spans residues 151-178; sequence VGAGVVSGAIIGTFLGIILLIVGGLYLF. Residues 179 to 246 lie on the Cytoplasmic side of the membrane; sequence RYIVRRRARS…KLSESKRDKK (68 aa). A disordered region spans residues 200-246; the sequence is AERGKVSGKAGTVSKGPVLYATLDQSKSGKGASEKKSKLSESKRDKK. Basic and acidic residues predominate over residues 231–246; it reads ASEKKSKLSESKRDKK.

The protein belongs to the myelin P0 protein family. Post-translationally, N-glycan is sulfated. In terms of tissue distribution, found only in peripheral nervous system Schwann cells.

Its subcellular location is the cell membrane. In terms of biological role, creation of an extracellular membrane face which guides the wrapping process and ultimately compacts adjacent lamellae. The polypeptide is Myelin protein P0 (mpz) (Heterodontus francisci (Horn shark)).